A 289-amino-acid chain; its full sequence is Borealin (289 aa).

The interval 1–58 (MAPKKRSSRGTRTNTLRSRKLASFLKDFDREVQVRTKQIESDRQTLLKEVENLYNIEI) is required for interaction with INCENP. The interval 1-88 (MAPKKRSSRG…NKQALEEAAK (88 aa)) is required for centromere localization. Positions 1–150 (MAPKKRSSRG…KKSHKNLRSA (150 aa)) are required for interaction with SENP3. The segment at 10–109 (GTRTNTLRSR…TAEAIQTPLK (100 aa)) is required to form a minimal CPC core complex that localizes to the central spindle and midbody and properly executes the role of the CPC during cytokinesis. Residues 20–78 (KLASFLKDFDREVQVRTKQIESDRQTLLKEVENLYNIEILRLPKALQGMKWLDYFALGG) form a required for interaction with INCENP and BIRC5 region. Residue R91 is modified to Citrulline. T94 carries the post-translational modification Phosphothreonine; by TTK. T106 carries the phosphothreonine modification. S110 carries the phosphoserine modification. The interval 122–173 (SIKEEEEEEEEGGGGGGRTKKSHKNLRSAKVKRCLPSKKRTQSIQGRGRSKR) is disordered. The segment covering 123-133 (IKEEEEEEEEG) has biased composition (acidic residues). Basic residues predominate over residues 139–162 (RTKKSHKNLRSAKVKRCLPSKKRT). A Glycyl lysine isopeptide (Lys-Gly) (interchain with G-Cter in SUMO2) cross-link involves residue K145. S175 carries the post-translational modification Phosphoserine. Phosphothreonine is present on residues T198 and T213. S228, S233, S247, and S253 each carry phosphoserine.

It belongs to the borealin family. In terms of assembly, may form homooligomers and homodimers. Component of the chromosomal passenger complex (CPC) composed of at least BIRC5/survivin, CDCA8/borealin, INCENP, AURKB or AURKC; in the complex forms a triple-helix bundle-based subcomplex with INCENP and BIRC5. Interacts with SENP3, UBE2I and RANBP2. Interacts (phosphorylated) with SGO1 and SGO2A; the association is dependent on CDK1. Phosphorylated by TTK, essentially at Thr-94. Phosphorylation (probably by CDK1) promotes targeting of the CPC to centromeric DNA. In terms of processing, sumoylated by UBE2I and RANBP2. Desumoylated by SENP3 through the removal of SUMO2 and SUMO3. Post-translationally, citrullinated by PADI4.

The protein resides in the nucleus. It is found in the nucleolus. Its subcellular location is the cytoplasm. It localises to the chromosome. The protein localises to the centromere. The protein resides in the cytoskeleton. It is found in the spindle. Its function is as follows. Component of the chromosomal passenger complex (CPC), a complex that acts as a key regulator of mitosis. The CPC complex has essential functions at the centromere in ensuring correct chromosome alignment and segregation and is required for chromatin-induced microtubule stabilization and spindle assembly. In the complex, it may be required to direct the CPC to centromeric DNA. Major effector of the TTK kinase in the control of attachment-error-correction and chromosome alignment. The chain is Borealin (Cdca8) from Mus musculus (Mouse).